Consider the following 937-residue polypeptide: Vacuolar membrane protease (937 aa).

The Cytoplasmic segment spans residues 1 to 16 (PNGFVKFIRSIFGYRK). The helical transmembrane segment at 17–37 (TSLTLFVILTYVAVLLLAYLD) threads the bilayer. At 38–373 (HSLYYSVDLP…FPTSQVVVAS (336 aa)) the chain is on the vacuolar side. N-linked (GlcNAc...) asparagine glycosylation is found at Asn-106 and Asn-140. Zn(2+)-binding residues include His-154 and Asp-166. The active-site Proton acceptor is Glu-201. The Zn(2+) site is built by Glu-202, Glu-227, and His-300. A helical transmembrane segment spans residues 374-394 (ILLLVLIPGISIPFLIIIFGY). Residues 395 to 407 (KKNWELSFVNVTK) lie on the Cytoplasmic side of the membrane. The helical transmembrane segment at 408–428 (FPISLAISAALLNLFTNGFIV) threads the bilayer. The Vacuolar portion of the chain corresponds to 429-437 (PFNQFLPNS). The chain crosses the membrane as a helical span at residues 438-458 (SPFALVAILFATFLLLNYLIL). Topologically, residues 459–475 (NGINLIFVSYKIVNHDE) are cytoplasmic. Residues 476–496 (KLISIIETSFLYWVVLIYSTA) form a helical membrane-spanning segment. Topologically, residues 497–510 (KLANNVIGDDHSGE) are vacuolar. A helical membrane pass occupies residues 511 to 531 (FPIIFLCALQAVASIFGLIGW). Residues 532–580 (SFKPVPKEHYVVVPQEEAEPLLGSSDNFNYGSPDVEDDRLVSDGSYDWS) are Cytoplasmic-facing. A helical membrane pass occupies residues 581-601 (IQFLTIVPISTYLIYNSGFLV). At 602–618 (VDGINKSIQESLISQNL) the chain is on the vacuolar side. A glycan (N-linked (GlcNAc...) asparagine) is linked at Asn-606. A helical membrane pass occupies residues 619–639 (IYKLLQTFAISLSIPLLPFIF). The Cytoplasmic portion of the chain corresponds to 640 to 643 (KVNR). Residues 644–664 (LFVLALFLISTIGVLFVATAD) form a helical membrane-spanning segment. Residues 665–937 (SFNVANPLKL…LVSVSKTVEL (273 aa)) are Vacuolar-facing. N-linked (GlcNAc...) asparagine glycans are attached at residues Asn-758, Asn-870, and Asn-887.

The protein belongs to the peptidase M28 family. The cofactor is Zn(2+).

The protein resides in the vacuole membrane. Its function is as follows. May be involved in vacuolar sorting and osmoregulation. In Scheffersomyces stipitis (strain ATCC 58785 / CBS 6054 / NBRC 10063 / NRRL Y-11545) (Yeast), this protein is Vacuolar membrane protease.